A 632-amino-acid polypeptide reads, in one-letter code: Probable potassium transport system protein Kup 2 (632 aa).

Transmembrane regions (helical) follow at residues 19–39 (FWGL…TSPL), 58–78 (MIVL…VTAK), 110–130 (MFLM…SMIT), 147–167 (PALE…LFAV), 178–198 (AFGP…IVHI), 216–236 (FLLS…LAVT), 257–277 (WLFF…ALVL), 290–310 (MVPE…TVIA), 347–367 (IYLP…VLLF), 377–397 (YGIA…VVIW), 404–424 (AAVA…FFSA), and 429–449 (LFEG…TIWT).

This sequence belongs to the HAK/KUP transporter (TC 2.A.72) family.

The protein resides in the cell inner membrane. The catalysed reaction is K(+)(in) + H(+)(in) = K(+)(out) + H(+)(out). Transport of potassium into the cell. Likely operates as a K(+):H(+) symporter. This Bradyrhizobium sp. (strain BTAi1 / ATCC BAA-1182) protein is Probable potassium transport system protein Kup 2.